Consider the following 473-residue polypeptide: Aspartyl/glutamyl-tRNA(Asn/Gln) amidotransferase subunit B (473 aa).

It belongs to the GatB/GatE family. GatB subfamily. In terms of assembly, heterotrimer of A, B and C subunits.

The enzyme catalyses L-glutamyl-tRNA(Gln) + L-glutamine + ATP + H2O = L-glutaminyl-tRNA(Gln) + L-glutamate + ADP + phosphate + H(+). The catalysed reaction is L-aspartyl-tRNA(Asn) + L-glutamine + ATP + H2O = L-asparaginyl-tRNA(Asn) + L-glutamate + ADP + phosphate + 2 H(+). In terms of biological role, allows the formation of correctly charged Asn-tRNA(Asn) or Gln-tRNA(Gln) through the transamidation of misacylated Asp-tRNA(Asn) or Glu-tRNA(Gln) in organisms which lack either or both of asparaginyl-tRNA or glutaminyl-tRNA synthetases. The reaction takes place in the presence of glutamine and ATP through an activated phospho-Asp-tRNA(Asn) or phospho-Glu-tRNA(Gln). This is Aspartyl/glutamyl-tRNA(Asn/Gln) amidotransferase subunit B from Methanococcoides burtonii (strain DSM 6242 / NBRC 107633 / OCM 468 / ACE-M).